The following is a 318-amino-acid chain: Deoxyribose-phosphate aldolase (318 aa).

The active-site Proton donor/acceptor is D155. K218 serves as the catalytic Schiff-base intermediate with acetaldehyde. The active-site Proton donor/acceptor is K254.

Belongs to the DeoC/FbaB aldolase family. DeoC type 2 subfamily. Interacts with YBX1.

The protein localises to the cytoplasm. Its subcellular location is the cytoplasmic granule. The protein resides in the nucleus. It catalyses the reaction 2-deoxy-D-ribose 5-phosphate = D-glyceraldehyde 3-phosphate + acetaldehyde. Its pathway is carbohydrate degradation; 2-deoxy-D-ribose 1-phosphate degradation; D-glyceraldehyde 3-phosphate and acetaldehyde from 2-deoxy-alpha-D-ribose 1-phosphate: step 2/2. In terms of biological role, catalyzes a reversible aldol reaction between acetaldehyde and D-glyceraldehyde 3-phosphate to generate 2-deoxy-D-ribose 5-phosphate. Participates in stress granule (SG) assembly. May allow ATP production from extracellular deoxyinosine in conditions of energy deprivation. This chain is Deoxyribose-phosphate aldolase (Dera), found in Mus musculus (Mouse).